The following is a 190-amino-acid chain: Small ribosomal subunit protein uS4 (190 aa).

In terms of domain architecture, S4 RNA-binding spans 106–178; it reads RRLQTVVFKH…GRVKRVKRNA (73 aa). Residues 166–190 form a disordered region; the sequence is GRPGRVKRVKRNAAKKGSGGGDDDE. Basic residues predominate over residues 169–179; that stretch reads GRVKRVKRNAA.

This sequence belongs to the universal ribosomal protein uS4 family.

In Trypanosoma brucei brucei, this protein is Small ribosomal subunit protein uS4.